We begin with the raw amino-acid sequence, 289 residues long: NAD kinase (289 aa).

The active-site Proton acceptor is aspartate 63. Residues 63–64, arginine 68, 138–139, arginine 149, aspartate 168, 179–184, and glutamine 238 each bind NAD(+); these read DG, ND, and TGYSLS.

This sequence belongs to the NAD kinase family. The cofactor is a divalent metal cation.

Its subcellular location is the cytoplasm. The enzyme catalyses NAD(+) + ATP = ADP + NADP(+) + H(+). In terms of biological role, involved in the regulation of the intracellular balance of NAD and NADP, and is a key enzyme in the biosynthesis of NADP. Catalyzes specifically the phosphorylation on 2'-hydroxyl of the adenosine moiety of NAD to yield NADP. In Gemmatimonas aurantiaca (strain DSM 14586 / JCM 11422 / NBRC 100505 / T-27), this protein is NAD kinase.